The primary structure comprises 264 residues: Thymidylate synthase (264 aa).

A dUMP-binding site is contributed by Arg21. A (6R)-5,10-methylene-5,6,7,8-tetrahydrofolate-binding site is contributed by His51. Residue 126-127 coordinates dUMP; the sequence is RR. Cys146 serves as the catalytic Nucleophile. Residues 166–169, Asn177, and 207–209 contribute to the dUMP site; these read RSAD and HIY. Asp169 serves as a coordination point for (6R)-5,10-methylene-5,6,7,8-tetrahydrofolate. Ser263 contacts (6R)-5,10-methylene-5,6,7,8-tetrahydrofolate.

The protein belongs to the thymidylate synthase family. Bacterial-type ThyA subfamily. As to quaternary structure, homodimer.

It localises to the cytoplasm. It catalyses the reaction dUMP + (6R)-5,10-methylene-5,6,7,8-tetrahydrofolate = 7,8-dihydrofolate + dTMP. The protein operates within pyrimidine metabolism; dTTP biosynthesis. Functionally, catalyzes the reductive methylation of 2'-deoxyuridine-5'-monophosphate (dUMP) to 2'-deoxythymidine-5'-monophosphate (dTMP) while utilizing 5,10-methylenetetrahydrofolate (mTHF) as the methyl donor and reductant in the reaction, yielding dihydrofolate (DHF) as a by-product. This enzymatic reaction provides an intracellular de novo source of dTMP, an essential precursor for DNA biosynthesis. The protein is Thymidylate synthase of Bacillus velezensis (strain DSM 23117 / BGSC 10A6 / LMG 26770 / FZB42) (Bacillus amyloliquefaciens subsp. plantarum).